Consider the following 355-residue polypeptide: Serum paraoxonase/arylesterase 1 (355 aa).

A disulfide bridge connects residues cysteine 42 and cysteine 353. Ca(2+) contacts are provided by glutamate 53 and aspartate 54. Histidine 115 (proton acceptor) is an active-site residue. Ca(2+)-binding residues include isoleucine 117, asparagine 168, aspartate 169, and asparagine 224. An N-linked (GlcNAc...) asparagine glycan is attached at asparagine 253. Ca(2+) is bound by residues aspartate 269 and asparagine 270. 2 N-linked (GlcNAc...) asparagine glycosylation sites follow: asparagine 270 and asparagine 324.

Belongs to the paraoxonase family. Homodimer. Interacts with CLU. Requires Ca(2+) as cofactor. Post-translationally, the signal sequence is not cleaved. In terms of tissue distribution, plasma, liver, kidney, heart, brain, small intestine and lung. In the plasma, associated with HDL.

Its subcellular location is the secreted. The protein localises to the extracellular space. It carries out the reaction a phenyl acetate + H2O = a phenol + acetate + H(+). The catalysed reaction is An aryl dialkyl phosphate + H2O = dialkyl phosphate + an aryl alcohol.. It catalyses the reaction an N-acyl-L-homoserine lactone + H2O = an N-acyl-L-homoserine + H(+). Hydrolyzes the toxic metabolites of a variety of organophosphorus insecticides. Capable of hydrolyzing a broad spectrum of organophosphate substrates and lactones, and a number of aromatic carboxylic acid esters. Mediates an enzymatic protection of low density lipoproteins against oxidative modification. The sequence is that of Serum paraoxonase/arylesterase 1 (Pon1) from Mus musculus (Mouse).